Consider the following 63-residue polypeptide: ATP synthase F(0) complex subunit 8 (63 aa).

The helical transmembrane segment at 8-24 (TWFLTILSVMLTLFTLL) threads the bilayer. K57 is modified (N6-acetyllysine).

Belongs to the ATPase protein 8 family. In terms of assembly, component of the ATP synthase complex composed at least of ATP5F1A/subunit alpha, ATP5F1B/subunit beta, ATP5MC1/subunit c (homooctomer), MT-ATP6/subunit a, MT-ATP8/subunit 8, ATP5ME/subunit e, ATP5MF/subunit f, ATP5MG/subunit g, ATP5MK/subunit k, ATP5MJ/subunit j, ATP5F1C/subunit gamma, ATP5F1D/subunit delta, ATP5F1E/subunit epsilon, ATP5PF/subunit F6, ATP5PB/subunit b, ATP5PD/subunit d, ATP5PO/subunit OSCP. ATP synthase complex consists of a soluble F(1) head domain (subunits alpha(3) and beta(3)) - the catalytic core - and a membrane F(0) domain - the membrane proton channel (subunits c, a, 8, e, f, g, k and j). These two domains are linked by a central stalk (subunits gamma, delta, and epsilon) rotating inside the F1 region and a stationary peripheral stalk (subunits F6, b, d, and OSCP). Interacts with PRICKLE3.

The protein resides in the mitochondrion membrane. In terms of biological role, subunit 8, of the mitochondrial membrane ATP synthase complex (F(1)F(0) ATP synthase or Complex V) that produces ATP from ADP in the presence of a proton gradient across the membrane which is generated by electron transport complexes of the respiratory chain. ATP synthase complex consist of a soluble F(1) head domain - the catalytic core - and a membrane F(1) domain - the membrane proton channel. These two domains are linked by a central stalk rotating inside the F(1) region and a stationary peripheral stalk. During catalysis, ATP synthesis in the catalytic domain of F(1) is coupled via a rotary mechanism of the central stalk subunits to proton translocation. In vivo, can only synthesize ATP although its ATP hydrolase activity can be activated artificially in vitro. Part of the complex F(0) domain. The protein is ATP synthase F(0) complex subunit 8 of Physeter macrocephalus (Sperm whale).